The primary structure comprises 550 residues: Probable terpene synthase 2 (550 aa).

The Mg(2+) site is built by Asp-305, Asp-309, and Glu-457. The short motif at Asp-305–Asp-309 is the DDXXD motif element.

This sequence belongs to the terpene synthase family. Mg(2+) is required as a cofactor.

Functionally, probable sesquiterpene synthase. This is Probable terpene synthase 2 (TPS2) from Ricinus communis (Castor bean).